An 895-amino-acid polypeptide reads, in one-letter code: Tiger protein D1 (895 aa).

An N-terminal signal peptide occupies residues 1-21 (MIHKMYFFLILLFSLFIIVYS). The Extracellular segment spans residues 22 to 861 (APNRVTRNET…ERKSSKLSGG (840 aa)). N-linked (GlcNAc...) asparagine glycans are attached at residues Asn29, Asn52, Asn171, Asn181, Asn253, Asn257, Asn277, Asn288, Asn351, Asn368, Asn407, Asn428, Asn451, Asn481, Asn507, Asn521, Asn573, Asn583, Asn593, Asn623, Asn652, Asn685, Asn720, Asn757, Asn766, Asn780, and Asn799. The IPT/TIG 1 domain maps to 295–381 (AVISSISSVS…SGSDAVTFTY (87 aa)). 2 IPT/TIG domains span residues 560–638 (PKVE…SFYL) and 642–725 (PVIY…TLTY). Residues 862 to 882 (AIAGITIGCVAGAGALVGSVF) traverse the membrane as a helical segment. Residues 883–895 (YFKLITRVKKAFN) are Cytoplasmic-facing.

The protein localises to the cell membrane. May be involved in the regulation of aggregation. Activates tgrC1. The protein is Tiger protein D1 (tgrD1) of Dictyostelium discoideum (Social amoeba).